A 319-amino-acid polypeptide reads, in one-letter code: Acetyl-coenzyme A carboxylase carboxyl transferase subunit alpha (319 aa).

The CoA carboxyltransferase C-terminal domain maps to 35-296 (NLDEEVQRLR…KAQLLADLND (262 aa)).

It belongs to the AccA family. Acetyl-CoA carboxylase is a heterohexamer composed of biotin carboxyl carrier protein (AccB), biotin carboxylase (AccC) and two subunits each of ACCase subunit alpha (AccA) and ACCase subunit beta (AccD).

The protein localises to the cytoplasm. It carries out the reaction N(6)-carboxybiotinyl-L-lysyl-[protein] + acetyl-CoA = N(6)-biotinyl-L-lysyl-[protein] + malonyl-CoA. Its pathway is lipid metabolism; malonyl-CoA biosynthesis; malonyl-CoA from acetyl-CoA: step 1/1. Component of the acetyl coenzyme A carboxylase (ACC) complex. First, biotin carboxylase catalyzes the carboxylation of biotin on its carrier protein (BCCP) and then the CO(2) group is transferred by the carboxyltransferase to acetyl-CoA to form malonyl-CoA. This chain is Acetyl-coenzyme A carboxylase carboxyl transferase subunit alpha, found in Yersinia pseudotuberculosis serotype O:3 (strain YPIII).